Consider the following 210-residue polypeptide: Protein GrpE (210 aa).

The tract at residues 1-71 is disordered; it reads MSEKDQSVNN…DTKIKELEKL (71 aa). The span at 11–23 shows a compositional bias: acidic residues; that stretch reads TEEDFNVETEDNQ. A compositionally biased stretch (polar residues) spans 24-35; it reads NDTNIENSVSNT. A compositionally biased stretch (low complexity) spans 36–46; sequence DNSEANASDSE. A compositionally biased stretch (acidic residues) spans 47-60; the sequence is NNSEESIKDEESES. Residues 61–71 show a composition bias toward basic and acidic residues; that stretch reads QDTKIKELEKL.

It belongs to the GrpE family. As to quaternary structure, homodimer.

The protein localises to the cytoplasm. Functionally, participates actively in the response to hyperosmotic and heat shock by preventing the aggregation of stress-denatured proteins, in association with DnaK and GrpE. It is the nucleotide exchange factor for DnaK and may function as a thermosensor. Unfolded proteins bind initially to DnaJ; upon interaction with the DnaJ-bound protein, DnaK hydrolyzes its bound ATP, resulting in the formation of a stable complex. GrpE releases ADP from DnaK; ATP binding to DnaK triggers the release of the substrate protein, thus completing the reaction cycle. Several rounds of ATP-dependent interactions between DnaJ, DnaK and GrpE are required for fully efficient folding. In Staphylococcus epidermidis (strain ATCC 35984 / DSM 28319 / BCRC 17069 / CCUG 31568 / BM 3577 / RP62A), this protein is Protein GrpE.